A 1031-amino-acid chain; its full sequence is Receptor-like protein EIX1 (1031 aa).

A signal peptide spans 1 to 29; it reads MDKWKYARLAQFLFTLSLLFLETSFGLGG. Asparagine 30 carries an N-linked (GlcNAc...) asparagine glycan. An N-cap region spans residues 30 to 113; that stretch reads NKTLCLDKER…PRLTGKLSPS (84 aa). Over 30–971 the chain is Extracellular; that stretch reads NKTLCLDKER…DEEEEFPSLE (942 aa). An LRR 1 repeat occupies 117–140; sequence LEYLNYLDLSVNEFERSEIPRFIG. The LRR 2; degenerate repeat unit spans residues 142-165; sequence LKRLEYLNLSASFFSGVIPIQFQN. N-linked (GlcNAc...) asparagine glycans are attached at residues asparagine 149 and asparagine 165. 4 LRR repeats span residues 166–189, 191–215, 216–240, and 243–266; these read LTSLRTLDLGENNLIVKDLRWLSH, SSLEFLSLSSSNFQVNNWFQEITKV, PSLKELDLSGCGLSKLVPSQADLAN, and LISLSVLHLCCNEFSSSSEYSWVF. Asparagine 240 carries N-linked (GlcNAc...) asparagine glycosylation. The N-linked (GlcNAc...) asparagine glycan is linked to asparagine 267. LRR repeat units follow at residues 269-292, 293-317, 318-341, 346-369, 370-393, 394-416, 417-440, 441-463, 465-487, 488-509, 512-536, 538-559, 561-584, and 586-611; these read TTSLTSIDLLYNQLSGQIDDRFGT, LMYLEHLDLANNLKIEGGVPSSFGN, LTRLRHLDMSNTQTVQWLPELFLR, RKSLEVLGLNENSLFGSIVNATRF, SSLKKLYLQKNMLNGSFMESAGQV, STLEYLDLSENQMRGALPDLALF, PSLRELHLGSNQFRGRIPQGIGKL, SQLRILDVSSNRLEGLPESMGQL, NLESFDASYNVLKGTITESHLSN, LSSLVDLDLSFNSLALKTSFNW, PFQLQVISLPSCNLGPSFPKWLQNQ, NYTVLDISLASISDTLPSWFSS, PPDLKILNLSNNQISGRVSDLIEN, and YGYRVIDLSYNNFSGALPLVPTNVQI. Residue asparagine 317 is glycosylated (N-linked (GlcNAc...) asparagine). Residues asparagine 365 and asparagine 383 are each glycosylated (N-linked (GlcNAc...) asparagine). An N-linked (GlcNAc...) asparagine glycan is attached at asparagine 487. N-linked (GlcNAc...) asparagine glycosylation is found at asparagine 538, asparagine 568, and asparagine 597. An LRR 21; degenerate repeat occupies 612 to 629; that stretch reads FYLHKNQFFGSISSICRS. 6 LRR repeats span residues 630-654, 655-678, 679-703, 705-725, 726-750, and 752-773; these read RTSPTSLDLSHNQFSGELPDCWMNM, TSLAVLNLAYNNFSGEIPHSLGSL, TNLKALYIRQNSLSGMLPSFSQCQG, QILDLGGNKLTGSIPGWIGTD, LLNLRILSLRFNRLHGSIPSIICQL, and FLQILDLSANGLSGKIPHCFNN. 2 N-linked (GlcNAc...) asparagine glycosylation sites follow: asparagine 653 and asparagine 666. N-linked (GlcNAc...) asparagine glycosylation is found at asparagine 773 and asparagine 781. LRR repeat units lie at residues 823–847, 848–871, 872–895, and 896–918; these read LLYLKTIDLSSNELIGGVPKEIADM, RGLKSLNLSRNELNGTVIEGIGQM, RMLESLDMSRNQLSGVIPQDLANL, and TFLSVLDLSNNQLSGRIPSSTQL. Asparagine 854, asparagine 861, and asparagine 894 each carry an N-linked (GlcNAc...) asparagine glycan. Residues 919-971 form a C-cap/acidic domain region; sequence QSFDRSSYSDNAQLCGPPLQECPGYAPPSPLIDHGSNNNPQEHDEEEEFPSLE. The helical transmembrane segment at 972–992 threads the bilayer; that stretch reads FYISMVLSFFVAFWGILGCLI. Residues 993–1031 are Cytoplasmic-facing; it reads VNSSWRNAYFKFLTDTTSWLDMISRVWFARLKKKLRRAR.

This sequence belongs to the RLP family. Interacts with EIX elicitor protein.

The protein resides in the cell membrane. Involved in plant defense. Confers resistance to the fungal pathogen T.viride through recognition of the EIX elicitor protein. This Solanum lycopersicum (Tomato) protein is Receptor-like protein EIX1.